Here is a 440-residue protein sequence, read N- to C-terminus: UDP-N-acetylmuramoylalanine--D-glutamate ligase (440 aa).

113 to 119 contacts ATP; sequence GTNGKST.

Belongs to the MurCDEF family.

It is found in the cytoplasm. It carries out the reaction UDP-N-acetyl-alpha-D-muramoyl-L-alanine + D-glutamate + ATP = UDP-N-acetyl-alpha-D-muramoyl-L-alanyl-D-glutamate + ADP + phosphate + H(+). The protein operates within cell wall biogenesis; peptidoglycan biosynthesis. Cell wall formation. Catalyzes the addition of glutamate to the nucleotide precursor UDP-N-acetylmuramoyl-L-alanine (UMA). The polypeptide is UDP-N-acetylmuramoylalanine--D-glutamate ligase (Buchnera aphidicola subsp. Acyrthosiphon pisum (strain Tuc7)).